The chain runs to 705 residues: Ribosomal RNA large subunit methyltransferase K/L (705 aa).

Residues 42–154 enclose the THUMP domain; that stretch reads LAQKVCLSTR…RYGVSMYIDY (113 aa).

This sequence belongs to the methyltransferase superfamily. RlmKL family.

It is found in the cytoplasm. The enzyme catalyses guanosine(2445) in 23S rRNA + S-adenosyl-L-methionine = N(2)-methylguanosine(2445) in 23S rRNA + S-adenosyl-L-homocysteine + H(+). It catalyses the reaction guanosine(2069) in 23S rRNA + S-adenosyl-L-methionine = N(2)-methylguanosine(2069) in 23S rRNA + S-adenosyl-L-homocysteine + H(+). Its function is as follows. Specifically methylates the guanine in position 2445 (m2G2445) and the guanine in position 2069 (m7G2069) of 23S rRNA. The polypeptide is Ribosomal RNA large subunit methyltransferase K/L (Pseudoalteromonas translucida (strain TAC 125)).